A 23-amino-acid chain; its full sequence is Basic phospholipase A2 intermexin (23 aa).

Belongs to the phospholipase A2 family. Group II subfamily. Ca(2+) is required as a cofactor. Contains 7 disulfide bonds. As to expression, expressed by the venom gland.

It is found in the secreted. The catalysed reaction is a 1,2-diacyl-sn-glycero-3-phosphocholine + H2O = a 1-acyl-sn-glycero-3-phosphocholine + a fatty acid + H(+). Functionally, snake venom phospholipase A2 (PLA2) that shows presynaptic neurotoxicity and low myotoxicity. PLA2 catalyzes the calcium-dependent hydrolysis of the 2-acyl groups in 3-sn-phosphoglycerides. The chain is Basic phospholipase A2 intermexin from Gloydius intermedius (Central Asian pit viper).